Consider the following 1176-residue polypeptide: Pesticidal crystal protein Cry1Ag (1176 aa).

Belongs to the delta endotoxin family.

Its function is as follows. Promotes colloidosmotic lysis by binding to the midgut epithelial cells of many lepidopteran larvae. In Bacillus thuringiensis, this protein is Pesticidal crystal protein Cry1Ag (cry1Ag).